A 400-amino-acid chain; its full sequence is CCA-adding enzyme (400 aa).

Residues Gly8 and Arg11 each contribute to the ATP site. Residues Gly8 and Arg11 each coordinate CTP. Mg(2+)-binding residues include Asp21 and Asp23. ATP is bound by residues Arg91, Arg137, and Arg140. Residues Arg91, Arg137, and Arg140 each coordinate CTP. One can recognise an HD domain in the interval 217–322 (NFQYAMTALK…IDLFNKWDVW (106 aa)).

This sequence belongs to the tRNA nucleotidyltransferase/poly(A) polymerase family. Bacterial CCA-adding enzyme type 2 subfamily. Mg(2+) serves as cofactor.

It catalyses the reaction a tRNA precursor + 2 CTP + ATP = a tRNA with a 3' CCA end + 3 diphosphate. It carries out the reaction a tRNA with a 3' CCA end + 2 CTP + ATP = a tRNA with a 3' CCACCA end + 3 diphosphate. Catalyzes the addition and repair of the essential 3'-terminal CCA sequence in tRNAs without using a nucleic acid template. Adds these three nucleotides in the order of C, C, and A to the tRNA nucleotide-73, using CTP and ATP as substrates and producing inorganic pyrophosphate. tRNA 3'-terminal CCA addition is required both for tRNA processing and repair. Also involved in tRNA surveillance by mediating tandem CCA addition to generate a CCACCA at the 3' terminus of unstable tRNAs. While stable tRNAs receive only 3'-terminal CCA, unstable tRNAs are marked with CCACCA and rapidly degraded. The protein is CCA-adding enzyme of Actinobacillus succinogenes (strain ATCC 55618 / DSM 22257 / CCUG 43843 / 130Z).